We begin with the raw amino-acid sequence, 330 residues long: Malate dehydrogenase (330 aa).

12–18 lines the NAD(+) pocket; that stretch reads GAAGQIG. Substrate is bound by residues R93 and R99. Residues N106, Q113, and 130–132 each bind NAD(+); that span reads VGN. Residues N132 and R163 each coordinate substrate. Residue H188 is the Proton acceptor of the active site.

Belongs to the LDH/MDH superfamily. MDH type 2 family.

The catalysed reaction is (S)-malate + NAD(+) = oxaloacetate + NADH + H(+). In terms of biological role, catalyzes the reversible oxidation of malate to oxaloacetate. The protein is Malate dehydrogenase of Legionella pneumophila subsp. pneumophila (strain Philadelphia 1 / ATCC 33152 / DSM 7513).